Here is a 191-residue protein sequence, read N- to C-terminus: MTSTSKDTPESGYAVPPPNLFGVDFGLRLLLLASAVSALVVLVTSKQTESIPTSLPPPFPAFISRDAKFQHSPAFIYLLVALSVTCFYSIITMVASFAAITSPSSSPRMLFHLVLSDAVMAGVMASAAGTAGSVAYLGLKGNSHVNWNKVCNVYDKFCRHVGSSAAVSLVASVLLVSLVVLSSYSLYRRCR.

Residues M1–G22 lie on the Cytoplasmic side of the membrane. Residues V23–V43 form a helical membrane-spanning segment. Over T44 to P73 the chain is Extracellular. The helical transmembrane segment at A74–V94 threads the bilayer. The Cytoplasmic segment spans residues A95–A118. The chain crosses the membrane as a helical span at residues V119–L139. At K140–H160 the chain is on the extracellular side. The helical transmembrane segment at V161 to L181 threads the bilayer. At S182 to R191 the chain is on the cytoplasmic side.

The protein belongs to the Casparian strip membrane proteins (CASP) family. Homodimer and heterodimers.

The protein resides in the cell membrane. In Musa acuminata (Banana), this protein is CASP-like protein 1D1.